Reading from the N-terminus, the 377-residue chain is UDP-N-acetylglucosamine--N-acetylmuramyl-(pentapeptide) pyrophosphoryl-undecaprenol N-acetylglucosamine transferase (377 aa).

Residues 29-31, Asn-142, Arg-179, Ser-213, and Gln-308 contribute to the UDP-N-acetyl-alpha-D-glucosamine site; that span reads TAG.

This sequence belongs to the glycosyltransferase 28 family. MurG subfamily.

It localises to the cell membrane. It catalyses the reaction di-trans,octa-cis-undecaprenyl diphospho-N-acetyl-alpha-D-muramoyl-L-alanyl-D-glutamyl-meso-2,6-diaminopimeloyl-D-alanyl-D-alanine + UDP-N-acetyl-alpha-D-glucosamine = di-trans,octa-cis-undecaprenyl diphospho-[N-acetyl-alpha-D-glucosaminyl-(1-&gt;4)]-N-acetyl-alpha-D-muramoyl-L-alanyl-D-glutamyl-meso-2,6-diaminopimeloyl-D-alanyl-D-alanine + UDP + H(+). The protein operates within cell wall biogenesis; peptidoglycan biosynthesis. In terms of biological role, cell wall formation. Catalyzes the transfer of a GlcNAc subunit on undecaprenyl-pyrophosphoryl-MurNAc-pentapeptide (lipid intermediate I) to form undecaprenyl-pyrophosphoryl-MurNAc-(pentapeptide)GlcNAc (lipid intermediate II). This is UDP-N-acetylglucosamine--N-acetylmuramyl-(pentapeptide) pyrophosphoryl-undecaprenol N-acetylglucosamine transferase from Saccharopolyspora erythraea (strain ATCC 11635 / DSM 40517 / JCM 4748 / NBRC 13426 / NCIMB 8594 / NRRL 2338).